Here is a 349-residue protein sequence, read N- to C-terminus: Anthranilate phosphoribosyltransferase (349 aa).

5-phospho-alpha-D-ribose 1-diphosphate is bound by residues G82, 85-86 (GD), 92-95 (NVST), 110-118 (KHGNRGVSS), and S122. Residue G82 coordinates anthranilate. S94 lines the Mg(2+) pocket. N113 contacts anthranilate. Anthranilate is bound at residue R168. Residues D227 and E228 each coordinate Mg(2+).

Belongs to the anthranilate phosphoribosyltransferase family. Homodimer. The cofactor is Mg(2+).

The enzyme catalyses N-(5-phospho-beta-D-ribosyl)anthranilate + diphosphate = 5-phospho-alpha-D-ribose 1-diphosphate + anthranilate. The protein operates within amino-acid biosynthesis; L-tryptophan biosynthesis; L-tryptophan from chorismate: step 2/5. Its function is as follows. Catalyzes the transfer of the phosphoribosyl group of 5-phosphorylribose-1-pyrophosphate (PRPP) to anthranilate to yield N-(5'-phosphoribosyl)-anthranilate (PRA). The protein is Anthranilate phosphoribosyltransferase of Acinetobacter baylyi (strain ATCC 33305 / BD413 / ADP1).